Here is a 186-residue protein sequence, read N- to C-terminus: MDKEHLKKNLQEKMEKALKVLDHELKGLRTGRASVNLLDSVTVEAYGSKMPLSQVASLSTPDARTINVQVWDKSMVSSVEKGITIANLGLTPATDGQLIRLPIPALTEERRTALVKLAHKYGEDTKISLRNIRRDGNEALKKLEKDNVIAKDEHHSLSEQVQKLTDDYSSKVDSVIKQKEQEIMTV.

Belongs to the RRF family.

It is found in the cytoplasm. In terms of biological role, responsible for the release of ribosomes from messenger RNA at the termination of protein biosynthesis. May increase the efficiency of translation by recycling ribosomes from one round of translation to another. The polypeptide is Ribosome-recycling factor (Rickettsia conorii (strain ATCC VR-613 / Malish 7)).